Consider the following 295-residue polypeptide: Small ribosomal subunit protein uS2 (295 aa).

N-acetylserine is present on Ser-2. The residue at position 43 (Ser-43) is a Phosphoserine. An N6-acetyllysine modification is found at Lys-52. The interval 54–113 (TWEKLLLAARAIVAIENPADVSVISSRNTGQRAVLKFAAATGATPIAGRFTPGTFTNQIQ) is interaction with PPP1R16B. Lys-89 is subject to N6-acetyllysine; alternate. Lys-89 is covalently cross-linked (Glycyl lysine isopeptide (Lys-Gly) (interchain with G-Cter in SUMO2); alternate). Phosphothreonine is present on Thr-97. Laminin-binding regions lie at residues 161–180 (IPCNNKGAHSVGLMWWMLAR) and 205–229 (RDPEEIEKEEQAAAEKAVTKEEFQG). [DE]-W-[ST] repeat units follow at residues 230–232 (EWT), 247–249 (DWS), 266–268 (DWS), 275–277 (DWS), and 293–295 (EWS). Residues 242-295 (QPEVADWSEGVQVPSVPIQQFPTEDWSAQPATEDWSAAPTAQATEWVGATTEWS) are laminin-binding. Residues 266-295 (DWSAQPATEDWSAAPTAQATEWVGATTEWS) form a disordered region.

Belongs to the universal ribosomal protein uS2 family. Monomer (37LRP) and homodimer (67LR). Component of the small ribosomal subunit. Mature ribosomes consist of a small (40S) and a large (60S) subunit. The 40S subunit contains about 33 different proteins and 1 molecule of RNA (18S). The 60S subunit contains about 49 different proteins and 3 molecules of RNA (28S, 5.8S and 5S). Interacts with RPS21. Interacts with several laminins including at least LAMB1. Interacts with MDK. The mature dimeric form interacts with PPP1R16B (via its fourth ankyrin repeat). Interacts with PPP1CA only in the presence of PPP1R16B. Acylated. Acylation may be a prerequisite for conversion of the monomeric 37 kDa laminin receptor precursor (37LRP) to the mature dimeric 67 kDa laminin receptor (67LR), and may provide a mechanism for membrane association. Post-translationally, cleaved by stromelysin-3 (ST3) at the cell surface. Cleavage by stromelysin-3 may be a mechanism to alter cell-extracellular matrix interactions.

Its subcellular location is the cell membrane. It localises to the cytoplasm. It is found in the nucleus. Required for the assembly and/or stability of the 40S ribosomal subunit. Required for the processing of the 20S rRNA-precursor to mature 18S rRNA in a late step of the maturation of 40S ribosomal subunits. Also functions as a cell surface receptor for laminin. Plays a role in cell adhesion to the basement membrane and in the consequent activation of signaling transduction pathways. May play a role in cell fate determination and tissue morphogenesis. Also acts as a receptor for several other ligands, including the pathogenic prion protein, viruses, and bacteria. Acts as a PPP1R16B-dependent substrate of PPP1CA. The sequence is that of Small ribosomal subunit protein uS2 from Chlorocebus aethiops (Green monkey).